The primary structure comprises 376 residues: MAKQDYYEILGVSKTAEEREIRKAYKRLAMKYHPDRNQGDKEAEAKFKEIKEAYEVLTDSQKRAAYDQYGHAAFEQGGMGGGGFGGGADFSDIFGDVFGDIFGGGRGRQRAARGADLRYNMELTLEEAVRGVTKEIRIPTLEECDVCHGSGAKPGTQPQTCPTCHGSGQVQMRQGFFAVQQTCPHCQGRGTLIKDPCNKCHGHGRVERSKTLSVKIPAGVDTGDRIRLAGEGEAGEHGAPAGDLYVQVQVKQHPIFEREGNNLYCEVPINFAMAALGGEIEVPTLDGRVKLKVPGETQTGKLFRMRGKGVKSVRGGAQGDLLCRVVVETPVGLNEKQKQLLQELQESFGGPTGEHNSPRSKSFFDGVKKFFDDLTR.

One can recognise a J domain in the interval 5–70 (DYYEILGVSK…QKRAAYDQYG (66 aa)). The CR-type zinc finger occupies 131–209 (GVTKEIRIPT…CHGHGRVERS (79 aa)). Zn(2+) contacts are provided by cysteine 144, cysteine 147, cysteine 161, cysteine 164, cysteine 183, cysteine 186, cysteine 197, and cysteine 200. CXXCXGXG motif repeat units follow at residues 144–151 (CDVCHGSG), 161–168 (CPTCHGSG), 183–190 (CPHCQGRG), and 197–204 (CNKCHGHG).

It belongs to the DnaJ family. In terms of assembly, homodimer. Zn(2+) serves as cofactor.

It localises to the cytoplasm. In terms of biological role, participates actively in the response to hyperosmotic and heat shock by preventing the aggregation of stress-denatured proteins and by disaggregating proteins, also in an autonomous, DnaK-independent fashion. Unfolded proteins bind initially to DnaJ; upon interaction with the DnaJ-bound protein, DnaK hydrolyzes its bound ATP, resulting in the formation of a stable complex. GrpE releases ADP from DnaK; ATP binding to DnaK triggers the release of the substrate protein, thus completing the reaction cycle. Several rounds of ATP-dependent interactions between DnaJ, DnaK and GrpE are required for fully efficient folding. Also involved, together with DnaK and GrpE, in the DNA replication of plasmids through activation of initiation proteins. The chain is Chaperone protein DnaJ from Shigella flexneri serotype 5b (strain 8401).